The primary structure comprises 332 residues: CMRF35-like molecule 9 (332 aa).

Positions 1-18 (MRLLVLLWGCLLLPGYEA) are cleaved as a signal peptide. The Ig-like V-type domain maps to 19 to 121 (LEGPEEISGF…RGPDESLLIS (103 aa)). Over 19-247 (LEGPEEISGF…KPRVSIPMVR (229 aa)) the chain is Extracellular. A disulfide bridge connects residues Cys-37 and Cys-107. N-linked (GlcNAc...) asparagine glycosylation occurs at Asn-96. Thr-137, Thr-143, Thr-144, Thr-155, Thr-161, Thr-170, Thr-171, Thr-177, Thr-187, and Thr-195 each carry an O-linked (GalNAc...) threonine glycan. Positions 146 to 239 (LQPKAKAQQT…PALSSGSSKP (94 aa)) are disordered. Low complexity predominate over residues 147 to 158 (QPKAKAQQTQPP). A compositionally biased stretch (low complexity) spans 168-181 (AATTAKQGKTGAEA). The segment covering 186–205 (GTSQYGHERTSQYTGTSPHP) has biased composition (polar residues). The O-linked (GalNAc...) serine glycan is linked to Ser-196. 2 O-linked (GalNAc...) threonine glycosylation sites follow: Thr-199 and Thr-201. Ser-202 is a glycosylation site (O-linked (GalNAc...) serine). The O-linked (GalNAc...) threonine glycan is linked to Thr-207. O-linked (GalNAc...) serine glycans are attached at residues Ser-208, Ser-213, Ser-214, and Ser-222. Over residues 220 to 239 (LDSTSAEDTSPALSSGSSKP) the composition is skewed to polar residues. O-linked (GalNAc...) threonine glycosylation occurs at Thr-223. A glycan (O-linked (GalNAc...) serine) is linked at Ser-224. O-linked (GalNAc...) threonine glycosylation is present at Thr-228. Residues Ser-229 and Ser-237 are each glycosylated (O-linked (GalNAc...) serine). A helical transmembrane segment spans residues 248–268 (ILAPVLVLLSLLSAAGLIAFC). Residues 269–332 (SHLLLWRKEA…ELGFSKFVSA (64 aa)) are Cytoplasmic-facing.

Belongs to the CD300 family. O-glycosylated with sialylated oligosaccharides. In terms of tissue distribution, highly expressed in heart, skeletal muscle and placenta.

The protein localises to the apical cell membrane. It localises to the basolateral cell membrane. The protein resides in the endosome. It is found in the multivesicular body membrane. Functionally, receptor which may mediate L-selectin-dependent lymphocyte rollings. Binds SELL in a calcium dependent manner. Binds lymphocyte. The sequence is that of CMRF35-like molecule 9 (CD300LG) from Homo sapiens (Human).